Consider the following 252-residue polypeptide: Protein IL-40 (252 aa).

The signal sequence occupies residues 1 to 18; the sequence is MALLQLLLFAMLAACGFS. 2 N-linked (GlcNAc...) asparagine glycosylation sites follow: Asn-82 and Asn-177.

In terms of tissue distribution, expressed in bone marrow, spleen and lymph node.

Its subcellular location is the secreted. In terms of biological role, probable B cell-associated cytokine that plays a role in the regulation of humoral immune responses. Involved in lymphocyte B cell development and immunoglobulin/IgA production. The protein is Protein IL-40 of Mus musculus (Mouse).